Here is a 520-residue protein sequence, read N- to C-terminus: Cobyric acid synthase (520 aa).

A GATase cobBQ-type domain is found at 275 to 453 (VLRVAVIRLP…WHGVLENDAF (179 aa)). Cys356 acts as the Nucleophile in catalysis. The active site involves His445.

It belongs to the CobB/CobQ family. CobQ subfamily.

It participates in cofactor biosynthesis; adenosylcobalamin biosynthesis. Catalyzes amidations at positions B, D, E, and G on adenosylcobyrinic A,C-diamide. NH(2) groups are provided by glutamine, and one molecule of ATP is hydrogenolyzed for each amidation. The polypeptide is Cobyric acid synthase (Frankia casuarinae (strain DSM 45818 / CECT 9043 / HFP020203 / CcI3)).